The chain runs to 532 residues: Flavin-containing monooxygenase 1 (532 aa).

At Ala2 the chain carries N-acetylalanine. The Lumenal segment spans residues 2-510 (AKRVAIVGAG…TRIVQESPTP (509 aa)). FAD contacts are provided by residues 9–13 (GAGVS), Glu32, 40–41 (LW), and 61–62 (NS). NADP(+)-binding positions include 60–61 (SN) and 195–198 (SGTD). A helical membrane pass occupies residues 511–531 (FASLLKLLSLLALLMAIFLIF). Residue Leu532 is a topological domain, cytoplasmic.

It belongs to the FMO family. It depends on FAD as a cofactor. Liver.

It is found in the endoplasmic reticulum membrane. It carries out the reaction hypotaurine + NADPH + O2 + H(+) = taurine + NADP(+) + H2O. It catalyses the reaction hypotaurine + NADH + O2 + H(+) = taurine + NAD(+) + H2O. The enzyme catalyses trimethylamine + NADPH + O2 = trimethylamine N-oxide + NADP(+) + H2O. The catalysed reaction is N,N-dimethylaniline + NADPH + O2 + H(+) = N,N-dimethylaniline N-oxide + NADP(+) + H2O. Broad spectrum monooxygenase that catalyzes the oxygenation of a wide variety of nitrogen- and sulfur-containing compounds including xenobiotics. Catalyzes the S-oxygenation of hypotaurine to produce taurine, an organic osmolyte involved in cell volume regulation as well as a variety of cytoprotective and developmental processes. In vitro, catalyzes the N-oxygenation of trimethylamine (TMA) to produce trimethylamine N-oxide (TMAO) and could therefore participate to the detoxification of this compound that is generated by the action of gut microbiota from dietary precursors such as choline, choline containing compounds, betaine or L-carnitine. The polypeptide is Flavin-containing monooxygenase 1 (FMO1) (Canis lupus familiaris (Dog)).